Reading from the N-terminus, the 479-residue chain is UDP-N-acetylmuramate--L-alanine ligase (479 aa).

124–130 contacts ATP; that stretch reads GSHGKTT.

The protein belongs to the MurCDEF family.

It localises to the cytoplasm. The enzyme catalyses UDP-N-acetyl-alpha-D-muramate + L-alanine + ATP = UDP-N-acetyl-alpha-D-muramoyl-L-alanine + ADP + phosphate + H(+). The protein operates within cell wall biogenesis; peptidoglycan biosynthesis. Its function is as follows. Cell wall formation. This is UDP-N-acetylmuramate--L-alanine ligase from Synechococcus sp. (strain RCC307).